A 285-amino-acid chain; its full sequence is Ribonuclease Z (285 aa).

Positions 61, 63, 65, 66, 152, 175, and 239 each coordinate Zn(2+). The active-site Proton acceptor is Asp65.

Belongs to the RNase Z family. As to quaternary structure, homodimer. Zn(2+) is required as a cofactor.

The enzyme catalyses Endonucleolytic cleavage of RNA, removing extra 3' nucleotides from tRNA precursor, generating 3' termini of tRNAs. A 3'-hydroxy group is left at the tRNA terminus and a 5'-phosphoryl group is left at the trailer molecule.. Zinc phosphodiesterase, which displays some tRNA 3'-processing endonuclease activity. Probably involved in tRNA maturation, by removing a 3'-trailer from precursor tRNA. In Mycobacterium sp. (strain JLS), this protein is Ribonuclease Z.